The primary structure comprises 286 residues: Bifunctional protein FolD (286 aa).

Residues 166-168 (GQS), Ser-191, and Ile-232 contribute to the NADP(+) site.

It belongs to the tetrahydrofolate dehydrogenase/cyclohydrolase family. As to quaternary structure, homodimer.

The enzyme catalyses (6R)-5,10-methylene-5,6,7,8-tetrahydrofolate + NADP(+) = (6R)-5,10-methenyltetrahydrofolate + NADPH. The catalysed reaction is (6R)-5,10-methenyltetrahydrofolate + H2O = (6R)-10-formyltetrahydrofolate + H(+). It participates in one-carbon metabolism; tetrahydrofolate interconversion. Functionally, catalyzes the oxidation of 5,10-methylenetetrahydrofolate to 5,10-methenyltetrahydrofolate and then the hydrolysis of 5,10-methenyltetrahydrofolate to 10-formyltetrahydrofolate. The chain is Bifunctional protein FolD from Alkalilimnicola ehrlichii (strain ATCC BAA-1101 / DSM 17681 / MLHE-1).